The chain runs to 67 residues: Large ribosomal subunit protein bL35 (67 aa).

It belongs to the bacterial ribosomal protein bL35 family.

The protein is Large ribosomal subunit protein bL35 of Rhizorhabdus wittichii (strain DSM 6014 / CCUG 31198 / JCM 15750 / NBRC 105917 / EY 4224 / RW1) (Sphingomonas wittichii).